The chain runs to 230 residues: Cytidylate kinase (230 aa).

12-20 (GPSGTGKST) serves as a coordination point for ATP.

It belongs to the cytidylate kinase family. Type 1 subfamily.

The protein localises to the cytoplasm. It carries out the reaction CMP + ATP = CDP + ADP. The enzyme catalyses dCMP + ATP = dCDP + ADP. This Corynebacterium glutamicum (strain ATCC 13032 / DSM 20300 / JCM 1318 / BCRC 11384 / CCUG 27702 / LMG 3730 / NBRC 12168 / NCIMB 10025 / NRRL B-2784 / 534) protein is Cytidylate kinase.